Reading from the N-terminus, the 150-residue chain is UPF0178 protein Bcep18194_A4809 (150 aa).

This sequence belongs to the UPF0178 family.

The chain is UPF0178 protein Bcep18194_A4809 from Burkholderia lata (strain ATCC 17760 / DSM 23089 / LMG 22485 / NCIMB 9086 / R18194 / 383).